The primary structure comprises 142 residues: ATP synthase epsilon chain (142 aa).

It belongs to the ATPase epsilon chain family. In terms of assembly, F-type ATPases have 2 components, CF(1) - the catalytic core - and CF(0) - the membrane proton channel. CF(1) has five subunits: alpha(3), beta(3), gamma(1), delta(1), epsilon(1). CF(0) has three main subunits: a, b and c.

The protein resides in the cell inner membrane. Its function is as follows. Produces ATP from ADP in the presence of a proton gradient across the membrane. The polypeptide is ATP synthase epsilon chain (Shewanella frigidimarina (strain NCIMB 400)).